Reading from the N-terminus, the 221-residue chain is U1 small nuclear ribonucleoprotein C (221 aa).

The Matrin-type zinc finger occupies 4–36; that stretch reads HYCDYCDVFLTHDSVSVRKAHNSGRNHLQNVRE. Positions 80-221 are disordered; the sequence is GAGPLSGSSD…PHSRTGYGPR (142 aa). A compositionally biased stretch (pro residues) spans 142 to 158; it reads YSRPPPQGGPYSRPPPD. Residues 178-190 are compositionally biased toward low complexity; that stretch reads PLGYGAPLPGAYP. A compositionally biased stretch (pro residues) spans 191–204; it reads SGPPPNMRGPPPPL.

The protein belongs to the U1 small nuclear ribonucleoprotein C family. As to quaternary structure, U1 snRNP is composed of the 7 core Sm proteins B/B', D1, D2, D3, E, F and G that assemble in a heptameric protein ring on the Sm site of the small nuclear RNA to form the core snRNP, and at least 3 U1 snRNP-specific proteins U1-70K, U1-A and U1-C. U1-C interacts with U1 snRNA and the 5' splice-site region of the pre-mRNA.

It is found in the nucleus. Component of the spliceosomal U1 snRNP, which is essential for recognition of the pre-mRNA 5' splice-site and the subsequent assembly of the spliceosome. U1-C is directly involved in initial 5' splice-site recognition for both constitutive and regulated alternative splicing. The interaction with the 5' splice-site seems to precede base-pairing between the pre-mRNA and the U1 snRNA. Stimulates commitment or early (E) complex formation by stabilizing the base pairing of the 5' end of the U1 snRNA and the 5' splice-site region. This is U1 small nuclear ribonucleoprotein C from Mycosarcoma maydis (Corn smut fungus).